We begin with the raw amino-acid sequence, 641 residues long: Chaperone protein HtpG (641 aa).

The segment at 1–351 (MTQSVHAETH…SNDLPLNVSR (351 aa)) is a; substrate-binding. A b region spans residues 352–568 (EILQDNKVTV…AHGMSTQMIK (217 aa)). Positions 569 to 641 (LMRAAGQPVP…SRINRLLLQA (73 aa)) are c.

This sequence belongs to the heat shock protein 90 family. In terms of assembly, homodimer.

It localises to the cytoplasm. Functionally, molecular chaperone. Has ATPase activity. The chain is Chaperone protein HtpG from Aeromonas hydrophila subsp. hydrophila (strain ATCC 7966 / DSM 30187 / BCRC 13018 / CCUG 14551 / JCM 1027 / KCTC 2358 / NCIMB 9240 / NCTC 8049).